Reading from the N-terminus, the 329-residue chain is Lipoyl synthase (329 aa).

[4Fe-4S] cluster-binding residues include Cys-55, Cys-60, Cys-66, Cys-81, Cys-85, Cys-88, and Ser-292. A Radical SAM core domain is found at 67 to 281 (WEDREATFLI…RDEAEAIGFL (215 aa)).

It belongs to the radical SAM superfamily. Lipoyl synthase family. The cofactor is [4Fe-4S] cluster.

It is found in the cytoplasm. It carries out the reaction [[Fe-S] cluster scaffold protein carrying a second [4Fe-4S](2+) cluster] + N(6)-octanoyl-L-lysyl-[protein] + 2 oxidized [2Fe-2S]-[ferredoxin] + 2 S-adenosyl-L-methionine + 4 H(+) = [[Fe-S] cluster scaffold protein] + N(6)-[(R)-dihydrolipoyl]-L-lysyl-[protein] + 4 Fe(3+) + 2 hydrogen sulfide + 2 5'-deoxyadenosine + 2 L-methionine + 2 reduced [2Fe-2S]-[ferredoxin]. It participates in protein modification; protein lipoylation via endogenous pathway; protein N(6)-(lipoyl)lysine from octanoyl-[acyl-carrier-protein]: step 2/2. Catalyzes the radical-mediated insertion of two sulfur atoms into the C-6 and C-8 positions of the octanoyl moiety bound to the lipoyl domains of lipoate-dependent enzymes, thereby converting the octanoylated domains into lipoylated derivatives. The chain is Lipoyl synthase from Leifsonia xyli subsp. xyli (strain CTCB07).